Consider the following 298-residue polypeptide: ADP/ATP translocase 1 (298 aa).

Residues 1 to 7 (MSDQALS) are Mitochondrial intermembrane-facing. S2 is modified (N-acetylserine). A Solcar 1 repeat occupies 6–98 (LSFLKDFLAG…FAFKDKYKQI (93 aa)). S7 carries the phosphoserine modification. A helical transmembrane segment spans residues 8-37 (FLKDFLAGGVAAAVSKTAVAPIERVKLLLQ). The Mitochondrial matrix portion of the chain corresponds to 38–74 (VQHASKQISAEKQYKGIIDCVVRIPKEQGFLSFWRGN). K52 is subject to N6,N6,N6-trimethyllysine. A helical membrane pass occupies residues 75–99 (LANVIRYFPTQALNFAFKDKYKQIF). Positions 80 and 92 each coordinate ADP. Over 100–109 (LGGVDRHKQF) the chain is Mitochondrial intermembrane. Residues 110-130 (WRYFAGNLASGGAAGATSLCF) form a helical membrane-spanning segment. Solcar repeat units lie at residues 111-201 (RYFA…AKGM) and 212-297 (VSWM…IKKY). Residues 131-178 (VYPLDFARTRLAADVGKGAAQREFSGLGNCLTKIFKSDGLRGLYQGFN) lie on the Mitochondrial matrix side of the membrane. N6-succinyllysine is present on K147. C160 is modified (S-nitrosocysteine). Residues 179-199 (VSVQGIIIYRAAYFGVYDTAK) form a helical membrane-spanning segment. Residues 200–210 (GMLPDPKNVHI) lie on the Mitochondrial intermembrane side of the membrane. The chain crosses the membrane as a helical span at residues 211-231 (IVSWMIAQTVTAVAGLVSYPF). Residues 232 to 273 (DTVRRRMMMQSGRKGADIMYTGTVDCWKKIAKDEGAKAFFKG) lie on the Mitochondrial matrix side of the membrane. R235 lines the ADP pocket. The important for transport activity stretch occupies residues 235-240 (RRRMMM). The short motif at 235–240 (RRRMMM) is the Nucleotide carrier signature motif element. An N6-succinyllysine mark is found at K245 and K272. The chain crosses the membrane as a helical span at residues 274 to 291 (AWSNVLRGMGGAFVLVLY). Residues 292 to 298 (DEIKKYV) lie on the Mitochondrial intermembrane side of the membrane.

It belongs to the mitochondrial carrier (TC 2.A.29) family. In terms of assembly, monomer. Found in a complex with ARL2, ARL2BP and SLC25A4/ANT1. Interacts with ARL2BP. Interacts with TIMM44; leading to inhibit the presequence translocase TIMM23, thereby promoting stabilization of PINK1. Under cell death induction, transglutaminated by TGM2. Transglutamination leads to formation of covalent cross-links between a glutamine and the epsilon-amino group of a lysine residue, forming polymers.

It localises to the mitochondrion inner membrane. Its subcellular location is the membrane. It catalyses the reaction ADP(in) + ATP(out) = ADP(out) + ATP(in). The catalysed reaction is H(+)(in) = H(+)(out). With respect to regulation, the matrix-open state (m-state) is inhibited by the membrane-permeable bongkrekic acid (BKA). The cytoplasmic-open state (c-state) is inhibited by the membrane-impermeable toxic inhibitor carboxyatractyloside (CATR). Proton transporter activity is inhibited by ADP:ATP antiporter activity. Functionally, ADP:ATP antiporter that mediates import of ADP into the mitochondrial matrix for ATP synthesis, and export of ATP out to fuel the cell. Cycles between the cytoplasmic-open state (c-state) and the matrix-open state (m-state): operates by the alternating access mechanism with a single substrate-binding site intermittently exposed to either the cytosolic (c-state) or matrix (m-state) side of the inner mitochondrial membrane. In addition to its ADP:ATP antiporter activity, also involved in mitochondrial uncoupling and mitochondrial permeability transition pore (mPTP) activity. Plays a role in mitochondrial uncoupling by acting as a proton transporter: proton transport uncouples the proton flows via the electron transport chain and ATP synthase to reduce the efficiency of ATP production and cause mitochondrial thermogenesis. Proton transporter activity is inhibited by ADP:ATP antiporter activity, suggesting that SLC25A4/ANT1 acts as a master regulator of mitochondrial energy output by maintaining a delicate balance between ATP production (ADP:ATP antiporter activity) and thermogenesis (proton transporter activity). Proton transporter activity requires free fatty acids as cofactor, but does not transport it. Probably mediates mitochondrial uncoupling in tissues that do not express UCP1. Also plays a key role in mPTP opening, a non-specific pore that enables free passage of the mitochondrial membranes to solutes of up to 1.5 kDa, and which contributes to cell death. It is however unclear if SLC25A4/ANT1 constitutes a pore-forming component of mPTP or regulates it. Acts as a regulator of mitophagy independently of ADP:ATP antiporter activity: promotes mitophagy via interaction with TIMM44, leading to inhibit the presequence translocase TIMM23, thereby promoting stabilization of PINK1. This chain is ADP/ATP translocase 1, found in Oryctolagus cuniculus (Rabbit).